We begin with the raw amino-acid sequence, 460 residues long: Bifunctional protein GlmU (460 aa).

Residues 1–229 form a pyrophosphorylase region; sequence MKNYAIILAA…FDESLGVNDR (229 aa). UDP-N-acetyl-alpha-D-glucosamine is bound by residues 8 to 11, lysine 22, glutamine 72, and 77 to 78; these read LAAG and GT. Residue aspartate 102 coordinates Mg(2+). UDP-N-acetyl-alpha-D-glucosamine is bound by residues glycine 139, glutamate 154, asparagine 169, and asparagine 227. Residue asparagine 227 participates in Mg(2+) binding. The tract at residues 230–250 is linker; that stretch reads LALAQAEVIMQERINKQHMLN. The interval 251-460 is N-acetyltransferase; that stretch reads GVTLQNPAAT…RLPHHPDQPQ (210 aa). UDP-N-acetyl-alpha-D-glucosamine is bound by residues arginine 332 and lysine 350. Histidine 362 acts as the Proton acceptor in catalysis. 2 residues coordinate UDP-N-acetyl-alpha-D-glucosamine: tyrosine 365 and asparagine 376. Acetyl-CoA contacts are provided by residues alanine 379, 385–386, serine 404, alanine 422, and arginine 439; that span reads NY.

In the N-terminal section; belongs to the N-acetylglucosamine-1-phosphate uridyltransferase family. The protein in the C-terminal section; belongs to the transferase hexapeptide repeat family. As to quaternary structure, homotrimer. Mg(2+) serves as cofactor.

The protein localises to the cytoplasm. The enzyme catalyses alpha-D-glucosamine 1-phosphate + acetyl-CoA = N-acetyl-alpha-D-glucosamine 1-phosphate + CoA + H(+). It carries out the reaction N-acetyl-alpha-D-glucosamine 1-phosphate + UTP + H(+) = UDP-N-acetyl-alpha-D-glucosamine + diphosphate. Its pathway is nucleotide-sugar biosynthesis; UDP-N-acetyl-alpha-D-glucosamine biosynthesis; N-acetyl-alpha-D-glucosamine 1-phosphate from alpha-D-glucosamine 6-phosphate (route II): step 2/2. It functions in the pathway nucleotide-sugar biosynthesis; UDP-N-acetyl-alpha-D-glucosamine biosynthesis; UDP-N-acetyl-alpha-D-glucosamine from N-acetyl-alpha-D-glucosamine 1-phosphate: step 1/1. The protein operates within bacterial outer membrane biogenesis; LPS lipid A biosynthesis. In terms of biological role, catalyzes the last two sequential reactions in the de novo biosynthetic pathway for UDP-N-acetylglucosamine (UDP-GlcNAc). The C-terminal domain catalyzes the transfer of acetyl group from acetyl coenzyme A to glucosamine-1-phosphate (GlcN-1-P) to produce N-acetylglucosamine-1-phosphate (GlcNAc-1-P), which is converted into UDP-GlcNAc by the transfer of uridine 5-monophosphate (from uridine 5-triphosphate), a reaction catalyzed by the N-terminal domain. This is Bifunctional protein GlmU from Streptococcus equi subsp. zooepidemicus (strain ATCC 35246 / C74-63).